We begin with the raw amino-acid sequence, 342 residues long: tRNA-specific 2-thiouridylase MnmA (342 aa).

Residues 6 to 13 and Leu32 contribute to the ATP site; that span reads GMSGGVDS. Residue Cys99 is the Nucleophile of the active site. Residues Cys99 and Cys190 are joined by a disulfide bond. Position 124 (Gly124) interacts with ATP. Residues 140-142 form an interaction with tRNA region; it reads KDQ. Cys190 (cysteine persulfide intermediate) is an active-site residue. Residues 292 to 293 form an interaction with tRNA region; the sequence is RY.

The protein belongs to the MnmA/TRMU family.

It localises to the cytoplasm. It carries out the reaction S-sulfanyl-L-cysteinyl-[protein] + uridine(34) in tRNA + AH2 + ATP = 2-thiouridine(34) in tRNA + L-cysteinyl-[protein] + A + AMP + diphosphate + H(+). In terms of biological role, catalyzes the 2-thiolation of uridine at the wobble position (U34) of tRNA, leading to the formation of s(2)U34. The chain is tRNA-specific 2-thiouridylase MnmA from Hydrogenobaculum sp. (strain Y04AAS1).